The primary structure comprises 626 residues: Dynein, cytoplasmic 1, intermediate chain 2a (626 aa).

Over residues 20 to 43 (QIREEKKRKEEERKKKEAELKKDA) the composition is skewed to basic and acidic residues. Disordered regions lie at residues 20-108 (QIRE…RTLH) and 142-197 (KEVV…HELT). Residues 82 to 99 (TAKSVGSPSEAGSQDSGD) are compositionally biased toward polar residues. Acidic residues predominate over residues 160–169 (KDEEDEEEET). Positions 177 to 197 (ETEKEKPEEKQVEEALPHELT) are enriched in basic and acidic residues. WD repeat units lie at residues 265 to 314 (SKQR…ATPE), 318 to 358 (HCQS…RTPV), 367 to 408 (AHTH…QPQD), 417 to 457 (SKSV…AGIS), 462 to 507 (GHHG…PLYS), 510 to 550 (DNSD…EVPT), and 556 to 595 (DGSP…AVPR).

This sequence belongs to the dynein intermediate chain family. As to quaternary structure, homodimer. The cytoplasmic dynein 1 complex consists of two catalytic heavy chains (HCs) and a number of non-catalytic subunits presented by intermediate chains (ICs), light intermediate chains (LICs) and light chains (LCs); the composition seems to vary in respect to the IC, LIC and LC composition. The heavy chain homodimer serves as a scaffold for the probable homodimeric assembly of the respective non-catalytic subunits. The ICs and LICs bind directly to the HC dimer and the LCs assemble on the IC dimer.

Its subcellular location is the cytoplasm. The protein localises to the cytoskeleton. Its function is as follows. Acts as one of several non-catalytic accessory components of the cytoplasmic dynein 1 complex that are thought to be involved in linking dynein to cargos and to adapter proteins that regulate dynein function. Cytoplasmic dynein 1 acts as a motor for the intracellular retrograde motility of vesicles and organelles along microtubules. Plays a role in the development of anterior brain and cartilaginous structures. The sequence is that of Dynein, cytoplasmic 1, intermediate chain 2a (dync1i2a) from Danio rerio (Zebrafish).